The chain runs to 377 residues: Queuine tRNA-ribosyltransferase (377 aa).

D93 functions as the Proton acceptor in the catalytic mechanism. Residues D93 to F97, D147, Q190, and G216 each bind substrate. Positions G247–D253 are RNA binding. The Nucleophile role is filled by D266. Positions T271–R275 are RNA binding; important for wobble base 34 recognition. C304, C306, C309, and H335 together coordinate Zn(2+).

Belongs to the queuine tRNA-ribosyltransferase family. Homodimer. Within each dimer, one monomer is responsible for RNA recognition and catalysis, while the other monomer binds to the replacement base PreQ1. Zn(2+) serves as cofactor.

It catalyses the reaction 7-aminomethyl-7-carbaguanine + guanosine(34) in tRNA = 7-aminomethyl-7-carbaguanosine(34) in tRNA + guanine. Its pathway is tRNA modification; tRNA-queuosine biosynthesis. In terms of biological role, catalyzes the base-exchange of a guanine (G) residue with the queuine precursor 7-aminomethyl-7-deazaguanine (PreQ1) at position 34 (anticodon wobble position) in tRNAs with GU(N) anticodons (tRNA-Asp, -Asn, -His and -Tyr). Catalysis occurs through a double-displacement mechanism. The nucleophile active site attacks the C1' of nucleotide 34 to detach the guanine base from the RNA, forming a covalent enzyme-RNA intermediate. The proton acceptor active site deprotonates the incoming PreQ1, allowing a nucleophilic attack on the C1' of the ribose to form the product. After dissociation, two additional enzymatic reactions on the tRNA convert PreQ1 to queuine (Q), resulting in the hypermodified nucleoside queuosine (7-(((4,5-cis-dihydroxy-2-cyclopenten-1-yl)amino)methyl)-7-deazaguanosine). The chain is Queuine tRNA-ribosyltransferase from Granulibacter bethesdensis (strain ATCC BAA-1260 / CGDNIH1).